Here is a 131-residue protein sequence, read N- to C-terminus: Ribonuclease VapC30 (131 aa).

Positions 1–129 (MVIDTSALVA…FQHTDIATVA (129 aa)) constitute a PINc domain. Aspartate 4 and aspartate 99 together coordinate Mg(2+).

The protein belongs to the PINc/VapC protein family. Mg(2+) is required as a cofactor.

Functionally, toxic component of a type II toxin-antitoxin (TA) system. An RNase. Its toxic effect is neutralized by coexpression with cognate antitoxin VapB30. The sequence is that of Ribonuclease VapC30 from Mycobacterium tuberculosis (strain CDC 1551 / Oshkosh).